The primary structure comprises 230 residues: Ribonuclease 3 (230 aa).

The region spanning Met-1–Gly-134 is the RNase III domain. A Mg(2+)-binding site is contributed by Glu-47. Asp-51 is a catalytic residue. Mg(2+)-binding residues include Asp-120 and Glu-123. Residue Glu-123 is part of the active site. Residues Asp-160–Glu-229 form the DRBM domain.

Belongs to the ribonuclease III family. Homodimer. Requires Mg(2+) as cofactor.

It localises to the cytoplasm. It catalyses the reaction Endonucleolytic cleavage to 5'-phosphomonoester.. Its function is as follows. Digests double-stranded RNA. Involved in the processing of primary rRNA transcript to yield the immediate precursors to the large and small rRNAs (23S and 16S). Processes some mRNAs, and tRNAs when they are encoded in the rRNA operon. Processes pre-crRNA and tracrRNA of type II CRISPR loci if present in the organism. This is Ribonuclease 3 from Streptococcus pyogenes serotype M3 (strain SSI-1).